Consider the following 209-residue polypeptide: Large ribosomal subunit protein uL3 (209 aa).

Position 150 is an N5-methylglutamine (Gln-150).

The protein belongs to the universal ribosomal protein uL3 family. As to quaternary structure, part of the 50S ribosomal subunit. Forms a cluster with proteins L14 and L19. Methylated by PrmB.

Functionally, one of the primary rRNA binding proteins, it binds directly near the 3'-end of the 23S rRNA, where it nucleates assembly of the 50S subunit. The polypeptide is Large ribosomal subunit protein uL3 (Ectopseudomonas mendocina (strain ymp) (Pseudomonas mendocina)).